We begin with the raw amino-acid sequence, 185 residues long: MINEILQKSEKKMAASLDVLSQELSGIRTGRSSPALVEHIKVEYAGVPTPINHLASIAAPDPRYITIQPWDRSCLSAIEKAIMKSDLGLMPNNDGNIIRLNIPPLSEERRQEMIKMVSKRLEEDKIAMRNVRRDAMDEMKKLEKSKEISQDDLKRGSDQLQKITDSFIAKADKLGADKETELKQV.

The protein belongs to the RRF family.

It localises to the cytoplasm. Functionally, responsible for the release of ribosomes from messenger RNA at the termination of protein biosynthesis. May increase the efficiency of translation by recycling ribosomes from one round of translation to another. The polypeptide is Ribosome-recycling factor (Dehalococcoides mccartyi (strain ATCC BAA-2266 / KCTC 15142 / 195) (Dehalococcoides ethenogenes (strain 195))).